The primary structure comprises 61 residues: Large ribosomal subunit protein eL37 (61 aa).

4 residues coordinate Zn(2+): Cys-19, Cys-22, Cys-34, and Cys-37. The C4-type zinc finger occupies 19 to 37; sequence CRRCGRNSFNARKGYCAAC.

The protein belongs to the eukaryotic ribosomal protein eL37 family. Zn(2+) is required as a cofactor.

In terms of biological role, binds to the 23S rRNA. This Sulfolobus acidocaldarius (strain ATCC 33909 / DSM 639 / JCM 8929 / NBRC 15157 / NCIMB 11770) protein is Large ribosomal subunit protein eL37.